The sequence spans 297 residues: Probable replication protein rep (297 aa).

This sequence belongs to the initiator RepB protein family.

The polypeptide is Probable replication protein rep (rep) (Bifidobacterium longum (strain NCC 2705)).